The chain runs to 541 residues: MSQLVECVPNFSEGNNQEVIDAISRAISQTPGCVLLDVDAGPSTNRTVYTFVGQPECVVEGALHAARTASQLIDMSKHKGEHPRMGALDVCPFIPVRGVSMEECVLCAKAFGQRLAEELNVPVYLYGEAAQTPSRQTLPAIRAGEYEALPEKLKQAEWVPDFGPSSFVPSWGATVTGARKFLIAFNINLLSTKEQAHRIALNLREQGRGKDQPGRLKKVQGIGWYLEEKNLAQVSTNLLDFEVTALHTVFEEARREAQELNLPVVGSQLVGLVPLKALLDAAAFYCDKEKLFVLEEEHRIRLVVNRLGLDSLAPFDPKERIIEYLVPDSGPEQSLLDTSLRGFVREVGARSAAPGGGSVAAAVAALGAALASMVGQMTYGRRQFDHLDSTMRRLIPPFHAASAQLTSLVDADARAFAACLEAIKLPKNTPEERDRRACALQEGLRQAVAVPLKLAETVSQLWPALQELAHCGNLSCLSDLQVAAKALETGVFGAYFNVLINLKDMTDDVFKEKTHHRISSLLQEAKTQAALVLGSLEARKE.

The formiminotransferase N-subdomain stretch occupies residues 1–181; the sequence is MSQLVECVPN…GATVTGARKF (181 aa). The active-site For formimidoyltransferase activity is His82. 163–172 is a folate binding site; sequence GPSSFVPSWG. The segment at 182–326 is formiminotransferase C-subdomain; the sequence is LIAFNINLLS…PKERIIEYLV (145 aa). Residues 327–334 form a linker region; sequence PDSGPEQS. Residues 335–541 form a cyclodeaminase/cyclohydrolase region; that stretch reads LLDTSLRGFV…VLGSLEARKE (207 aa). Asp412 functions as the For cyclodeaminase activity in the catalytic mechanism. Ser520 bears the Phosphoserine mark.

This sequence in the C-terminal section; belongs to the cyclodeaminase/cyclohydrolase family. The protein in the N-terminal section; belongs to the formiminotransferase family. In terms of assembly, homooctamer, including four polyglutamate binding sites. The subunits are arranged as a tetramer of dimers, and form a planar ring-shaped structure.

Its subcellular location is the cytoplasm. It is found in the cytoskeleton. The protein localises to the microtubule organizing center. It localises to the centrosome. The protein resides in the centriole. Its subcellular location is the golgi apparatus. The enzyme catalyses 5-formimidoyltetrahydrofolate + L-glutamate = N-formimidoyl-L-glutamate + (6S)-5,6,7,8-tetrahydrofolate. The catalysed reaction is (6S)-5-formyl-5,6,7,8-tetrahydrofolate + L-glutamate = N-formyl-L-glutamate + (6S)-5,6,7,8-tetrahydrofolate + H(+). It carries out the reaction 5-formimidoyltetrahydrofolate + 2 H(+) = (6R)-5,10-methenyltetrahydrofolate + NH4(+). Its pathway is amino-acid degradation; L-histidine degradation into L-glutamate; L-glutamate from N-formimidoyl-L-glutamate (transferase route): step 1/1. The protein operates within one-carbon metabolism; tetrahydrofolate interconversion. Functionally, folate-dependent enzyme, that displays both transferase and deaminase activity. Serves to channel one-carbon units from formiminoglutamate to the folate pool. Its function is as follows. Binds and promotes bundling of vimentin filaments originating from the Golgi. The polypeptide is Formimidoyltransferase-cyclodeaminase (Ftcd) (Mus musculus (Mouse)).